A 650-amino-acid chain; its full sequence is Acetyl-coenzyme A synthetase (650 aa).

CoA is bound by residues 191 to 194 (RAGR), threonine 311, and asparagine 335. Residues 387–389 (GEP), 411–416 (DTWWQT), aspartate 500, and arginine 515 each bind ATP. Serine 523 serves as a coordination point for CoA. Arginine 526 lines the ATP pocket. Mg(2+)-binding residues include valine 537, histidine 539, and valine 542. Arginine 584 serves as a coordination point for CoA. The residue at position 609 (lysine 609) is an N6-acetyllysine.

The protein belongs to the ATP-dependent AMP-binding enzyme family. The cofactor is Mg(2+). Post-translationally, acetylated. Deacetylation by the SIR2-homolog deacetylase activates the enzyme.

The catalysed reaction is acetate + ATP + CoA = acetyl-CoA + AMP + diphosphate. Its function is as follows. Catalyzes the conversion of acetate into acetyl-CoA (AcCoA), an essential intermediate at the junction of anabolic and catabolic pathways. AcsA undergoes a two-step reaction. In the first half reaction, AcsA combines acetate with ATP to form acetyl-adenylate (AcAMP) intermediate. In the second half reaction, it can then transfer the acetyl group from AcAMP to the sulfhydryl group of CoA, forming the product AcCoA. This Shewanella pealeana (strain ATCC 700345 / ANG-SQ1) protein is Acetyl-coenzyme A synthetase.